The following is a 309-amino-acid chain: MDAKTAQSIFGGIVAAKKRPSKEVPEPTINFKSANDSLVKKNLLLKQQVVQCTKTIEKLRNENVALRQKNQELIDGTLEQRIELIVEQRLKFRLAHAAVLHKKLVQNIQQTGLELDGLFKDLEPEPSGLNTRRPPKLELNLERVDEIPFCQSSMQGEIDENEIRFDNNSSQSTSSIQNAVNGTPRKKQSVGKGRRSELFQSFNADSSIVEEASTIPTNRRAPMLIAPSSTPAGPSKPTARKPPTPRFKKPSTPALAPQSDDTELSSTIQVRRQRSAKMNIKSLKEPSGKDKLRRPGKHDEPMPYINTFF.

A coiled-coil region spans residues 42–77 (NLLLKQQVVQCTKTIEKLRNENVALRQKNQELIDGT). Disordered regions lie at residues 165 to 195 (FDNN…KGRR) and 210 to 309 (EEAS…NTFF). Over residues 167-178 (NNSSQSTSSIQN) the composition is skewed to low complexity. A compositionally biased stretch (basic residues) spans 184–193 (PRKKQSVGKG).

Belongs to the shugoshin family. In terms of tissue distribution, expressed in gonads.

The protein resides in the nucleus. The protein localises to the chromosome. It is found in the centromere. Functionally, component of cell cycle checkpoints, which ensures chromosome segregation during meiosis and mitosis. During meiotic prophase, it is involved in the regulation of the synapsis checkpoint, which monitors whether homologous chromosomes have synapsed, and the DNA damage response. Plays a central role in chromosome cohesion during cell division by preventing premature dissociation of cohesin complex after prophase, when most of cohesin complex dissociates from chromosomes arms. The chain is Shugoshin from Caenorhabditis elegans.